The primary structure comprises 97 residues: MPTKTVVENDVEIIMPKLYKVMLLNDDYTTFDFVIEILKTVFHKNEEEAINITLKVDREGSAAVGVYPYEIAQVKIEKTHTLARQAGYPLRAVMEEV.

This sequence belongs to the ClpS family. In terms of assembly, binds to the N-terminal domain of the chaperone ClpA.

Functionally, involved in the modulation of the specificity of the ClpAP-mediated ATP-dependent protein degradation. The chain is ATP-dependent Clp protease adapter protein ClpS from Nautilia profundicola (strain ATCC BAA-1463 / DSM 18972 / AmH).